The following is a 972-amino-acid chain: 116 kDa U5 small nuclear ribonucleoprotein component (972 aa).

M1 is modified (N-acetylmethionine). Positions 1–54 (MDTDLYDEFGNYIGPELDSDEDDDELGRETKDLDEMDDDDDDDDIGDHDDDHPG) are disordered. 2 stretches are compositionally biased toward acidic residues: residues 17-26 (LDSDEDDDEL) and 34-48 (DEMD…IGDH). The residue at position 19 (S19) is a Phosphoserine. K64 is covalently cross-linked (Glycyl lysine isopeptide (Lys-Gly) (interchain with G-Cter in SUMO1); alternate). K64 participates in a covalent cross-link: Glycyl lysine isopeptide (Lys-Gly) (interchain with G-Cter in SUMO2); alternate. T86 carries the post-translational modification Phosphothreonine. The 283-residue stretch at 127–409 (ELIRNVTLCG…GIHLTKEELK (283 aa)) folds into the tr-type G domain. GTP is bound by residues 136-143 (GHLHHGKT), 204-208 (DTPGH), and 258-261 (NKID).

Belongs to the TRAFAC class translation factor GTPase superfamily. Classic translation factor GTPase family. EF-G/EF-2 subfamily. As to quaternary structure, component of the U5 snRNP and the U4/U6-U5 tri-snRNP complex, a building block of the spliceosome. The U4/U6-U5 tri-snRNP complex is composed of the U4, U6 and U5 snRNAs and at least PRPF3, PRPF4, PRPF6, PRPF8, PRPF31, SNRNP200, TXNL4A, SNRNP40, DDX23, CD2BP2, PPIH, SNU13, EFTUD2, SART1 and USP39. Component of the pre-catalytic, catalytic and post-catalytic spliceosome complexes. Component of the minor spliceosome, which splices U12-type introns. Within this complex, interacts with CRIPT. Interacts with ERBB4 and PRPF8. Interacts with PIH1D1. Interacts with RPAP3 and URI1 in a ZNHIT2-dependent manner. Interacts with NRDE2. Interacts with FAM50A. Interacts with UBL5.

Its subcellular location is the nucleus. Required for pre-mRNA splicing as component of the spliceosome, including pre-catalytic, catalytic and post-catalytic spliceosomal complexes. Component of the U5 snRNP and the U4/U6-U5 tri-snRNP complex, a building block of the spliceosome. As a component of the minor spliceosome, involved in the splicing of U12-type introns in pre-mRNAs. The chain is 116 kDa U5 small nuclear ribonucleoprotein component (EFTUD2) from Pongo abelii (Sumatran orangutan).